We begin with the raw amino-acid sequence, 396 residues long: S-adenosylmethionine synthase (396 aa).

His-16 lines the ATP pocket. Mg(2+) is bound at residue Asp-18. Glu-44 is a binding site for K(+). L-methionine-binding residues include Glu-57 and Gln-100. Residues 100-110 (QSPDINQGVDR) form a flexible loop region. Residues 165–167 (DAK), Asp-240, 246–247 (RK), Ala-263, and Lys-267 contribute to the ATP site. Asp-240 provides a ligand contact to L-methionine. Lys-271 lines the L-methionine pocket.

It belongs to the AdoMet synthase family. In terms of assembly, homotetramer; dimer of dimers. Requires Mg(2+) as cofactor. It depends on K(+) as a cofactor.

It is found in the cytoplasm. The enzyme catalyses L-methionine + ATP + H2O = S-adenosyl-L-methionine + phosphate + diphosphate. The protein operates within amino-acid biosynthesis; S-adenosyl-L-methionine biosynthesis; S-adenosyl-L-methionine from L-methionine: step 1/1. Functionally, catalyzes the formation of S-adenosylmethionine (AdoMet) from methionine and ATP. The overall synthetic reaction is composed of two sequential steps, AdoMet formation and the subsequent tripolyphosphate hydrolysis which occurs prior to release of AdoMet from the enzyme. This is S-adenosylmethionine synthase from Pseudomonas fluorescens (strain ATCC BAA-477 / NRRL B-23932 / Pf-5).